The following is a 162-amino-acid chain: MEKVFERLMYASRWIMAPIYLGLSLILFALGIKFFQEIFHIIPNIFSIKEVDLVLITLSLIDITLVGGLLIMVMFSGYENFVSQLDVGENSEKLNWLGKMDAGSLKNKVAASIVAISSIHLLKVFMNAENIANDKIMWYLLIHITFVLSAFAMGYLDKITRK.

3 helical membrane passes run 15 to 35 (IMAP…IKFF), 53 to 73 (LVLI…LIMV), and 136 to 156 (IMWY…MGYL).

This sequence belongs to the UPF0114 family.

It is found in the cell membrane. In Shewanella frigidimarina (strain NCIMB 400), this protein is UPF0114 protein Sfri_3655.